A 460-amino-acid chain; its full sequence is Cysteine--tRNA ligase (460 aa).

Cysteine 28 is a binding site for Zn(2+). The 'HIGH' region signature appears at 30–40; it reads MTVYDYCHLGH. Positions 209, 234, and 238 each coordinate Zn(2+). A 'KMSKS' region motif is present at residues 266-270; that stretch reads KMSKS. Residue lysine 269 participates in ATP binding.

Belongs to the class-I aminoacyl-tRNA synthetase family. As to quaternary structure, monomer. It depends on Zn(2+) as a cofactor.

It is found in the cytoplasm. It catalyses the reaction tRNA(Cys) + L-cysteine + ATP = L-cysteinyl-tRNA(Cys) + AMP + diphosphate. This Pseudomonas fluorescens (strain ATCC BAA-477 / NRRL B-23932 / Pf-5) protein is Cysteine--tRNA ligase.